Here is a 376-residue protein sequence, read N- to C-terminus: Ribosomal RNA large subunit methyltransferase G (376 aa).

This sequence belongs to the methyltransferase superfamily. RlmG family.

The protein resides in the cytoplasm. The enzyme catalyses guanosine(1835) in 23S rRNA + S-adenosyl-L-methionine = N(2)-methylguanosine(1835) in 23S rRNA + S-adenosyl-L-homocysteine + H(+). Its function is as follows. Specifically methylates the guanine in position 1835 (m2G1835) of 23S rRNA. This Klebsiella pneumoniae subsp. pneumoniae (strain ATCC 700721 / MGH 78578) protein is Ribosomal RNA large subunit methyltransferase G.